A 386-amino-acid chain; its full sequence is Antilisterial bacteriocin subtilosin biosynthesis protein AlbE (386 aa).

In terms of biological role, involved in the production of the bacteriocin subtilosin. This chain is Antilisterial bacteriocin subtilosin biosynthesis protein AlbE (albE), found in Bacillus subtilis (strain 168).